Reading from the N-terminus, the 184-residue chain is Large ribosomal subunit protein uL22A (184 aa).

Lys46 is covalently cross-linked (Glycyl lysine isopeptide (Lys-Gly) (interchain with G-Cter in ubiquitin)). Thr70 is subject to Phosphothreonine.

Belongs to the universal ribosomal protein uL22 family. As to quaternary structure, component of the large ribosomal subunit (LSU). Mature yeast ribosomes consist of a small (40S) and a large (60S) subunit. The 40S small subunit contains 1 molecule of ribosomal RNA (18S rRNA) and 33 different proteins (encoded by 57 genes). The large 60S subunit contains 3 rRNA molecules (25S, 5.8S and 5S rRNA) and 46 different proteins (encoded by 81 genes). uL22 is associated with the polypeptide exit tunnel.

The protein localises to the cytoplasm. Component of the ribosome, a large ribonucleoprotein complex responsible for the synthesis of proteins in the cell. The small ribosomal subunit (SSU) binds messenger RNAs (mRNAs) and translates the encoded message by selecting cognate aminoacyl-transfer RNA (tRNA) molecules. The large subunit (LSU) contains the ribosomal catalytic site termed the peptidyl transferase center (PTC), which catalyzes the formation of peptide bonds, thereby polymerizing the amino acids delivered by tRNAs into a polypeptide chain. The nascent polypeptides leave the ribosome through a tunnel in the LSU and interact with protein factors that function in enzymatic processing, targeting, and the membrane insertion of nascent chains at the exit of the ribosomal tunnel. The protein is Large ribosomal subunit protein uL22A of Saccharomyces cerevisiae (strain ATCC 204508 / S288c) (Baker's yeast).